The primary structure comprises 603 residues: MRQSYRYASGAVVRRTLKGLRKLILCQDLRQDIRHLVRSYADMNISLPVSAPPGWRLDFVEFEDIFGSAAVTDGPETPWGQLICCEESLESLGVLQFSTTVLPRVHGPRSSSEDEDSDDDDFFVYVEEIEPPSQARLVLLLGRYETVWCLDRDCGVLYYLAHSLDDFARHGLLHCEAIYGEQMRTPLLTTQPDHIICDLRLHDNSISELQRVTCRYRGECVPLRTPGEMTRPLLLCGQAENLKGVWPFICMETEQFNDLLKFFVDRLCCETMIMGVVGESLPSGVFHADFVILVDRACEFFYFDVSRREIWRLADSVDMLLTVGLLKIYQAGRRFHYAVDDAERLEVPGRCPHENFPFWDRFGTVERVRASTRHHELRYKWLIRKDRFIVRPDWCSMRNSLDEVSGTADVSWDPRIRPDYPQTSDLECAKQYWQELNDHVREQTARYGPVRRYSVWCGMSSRLERAVKRLQQRIPRQNLMNPSLMNQGLCVYYSDEEEDQEEDDTSDDDDQEKETENPQNNIGSLTRTPSSPGSLEGVEERMLNVMKEAVAEQDRKKTQKKHKIDTAQRRVLTRRAARAAVLEGRPTPKPTMPHPVSYLPFWM.

Residues 496–513 (EEEDQEEDDTSDDDDQEK) show a composition bias toward acidic residues. 2 disordered regions span residues 496–536 (EEED…GSLE) and 549–568 (AVAEQDRKKTQKKHKIDTAQ). Polar residues predominate over residues 517–533 (NPQNNIGSLTRTPSSPG).

The protein belongs to the herpesviridae US22 family.

The chain is Protein US26 (US26) from Human cytomegalovirus (strain Merlin) (HHV-5).